The chain runs to 74 residues: MEIDEDKIDDAVLALLWLTLHNERCAWKGFDWATTDRLHERGLICDPVNKSKSLVLTDEGLRRSEELFRRLFTR.

This is an uncharacterized protein from Sinorhizobium fredii (strain NBRC 101917 / NGR234).